Here is a 234-residue protein sequence, read N- to C-terminus: Exotoxin type G (234 aa).

The N-terminal stretch at 1 to 24 (MKTNILTIIILSCVFSYGSQLAYA) is a signal peptide.

Belongs to the staphylococcal/streptococcal toxin family.

Its function is as follows. Mitogenic for human peripheral blood lymphocytes. This chain is Exotoxin type G (speG), found in Streptococcus pyogenes serotype M3 (strain ATCC BAA-595 / MGAS315).